Here is a 97-residue protein sequence, read N- to C-terminus: uncharacterized protein (97 aa).

Residues 1–20 (MAKEQTDRTTLDLFAHERRP) are compositionally biased toward basic and acidic residues. Residues 1–30 (MAKEQTDRTTLDLFAHERRPGRPKTNPLSR) form a disordered region.

This is an uncharacterized protein from Escherichia coli O157:H7.